Consider the following 52-residue polypeptide: UPF0057 membrane protein YqaE (52 aa).

2 helical membrane passes run Met1–Lys21 and Phe23–Ile43.

The protein belongs to the UPF0057 (PMP3) family.

It localises to the cell membrane. The protein is UPF0057 membrane protein YqaE (yqaE) of Escherichia coli O157:H7.